A 428-amino-acid chain; its full sequence is MNYLFKNGRYMNEEGKIVATDLLVQDGKIAKVAENITADNAEVIDVNGKLIAPGLVDVHVHLREPGGEHKETIETGTLAAAKGGFTTICAMPNTRPVPDCREHMEDLQNRIKEKAHVNVLPYGAITVRQAGSEMTDFETLKELGAFAFTDDGVGVQDASMMLAAMKRAAKLNMAVVAHCEENTLINKGCVHEGKFSEKHGLNGIPSVCESVHIARDILLAEAADCHYHVCHVSTKGSVRVIRDAKRAGIKVTAEVTPHHLVLCEDDIPSADPNFKMNPPLRGKEDHAALIEGLLDGTIDMIATDHAPHTAEEKAQGIERAPFGITGFETAFPLLYTNLVKKGIITLEQLIQFLTEKPADTFGLEAGRLKEGRAADITIIDLEQEEEIDPTTFLSKGKNTPFAGWKCQGWPVMTIVGGKIAWQKESALV.

2 residues coordinate Zn(2+): His59 and His61. Substrate contacts are provided by residues 61–63 and Asn93; that span reads HLR. The Zn(2+) site is built by Asp151, His178, and His231. Asn277 lines the substrate pocket. Residue Asp304 coordinates Zn(2+). Residue Asp304 is part of the active site. Residues His308 and 322-323 contribute to the substrate site; that span reads FG.

This sequence belongs to the metallo-dependent hydrolases superfamily. DHOase family. Class I DHOase subfamily. Zn(2+) is required as a cofactor.

It carries out the reaction (S)-dihydroorotate + H2O = N-carbamoyl-L-aspartate + H(+). It participates in pyrimidine metabolism; UMP biosynthesis via de novo pathway; (S)-dihydroorotate from bicarbonate: step 3/3. Functionally, catalyzes the reversible cyclization of carbamoyl aspartate to dihydroorotate. The chain is Dihydroorotase from Bacillus cereus (strain ATCC 10987 / NRS 248).